Here is a 253-residue protein sequence, read N- to C-terminus: Zwei Ig domain protein zig-4 (253 aa).

A signal peptide spans 1 to 16 (MFAIALLSFLVVLINA). Ig-like C2-type domains lie at 43-146 (PAKI…AEVE) and 162-245 (PEIV…TFLY). Cystine bridges form between cysteine 67–cysteine 130 and cysteine 183–cysteine 229.

Expressed in PVT, ASK, BAG, M2 and ASI neurons. In L1 larvae, expressed in pharyngeal ectoderm and mesoderm.

Its subcellular location is the secreted. In terms of biological role, required for maintaining axon position of PVQ and PVP neurons postembryonically in the ventral nerve cord (VNC) by preventing axons drifting into the opposite side of the VNC that could occur during body growth and movement. This chain is Zwei Ig domain protein zig-4, found in Caenorhabditis elegans.